Reading from the N-terminus, the 461-residue chain is Elongation factor 1-alpha (461 aa).

At G2 the chain carries N,N,N-trimethylglycine. N6,N6-dimethyllysine; alternate is present on K3. K3 carries the N6-methyllysine; alternate modification. One can recognise a tr-type G domain in the interval 6–241 (KTHINVVVIG…DSIEPPKRPT (236 aa)). A G1 region spans residues 15–22 (GHVDSGKS). Residue 15–22 (GHVDSGKS) coordinates GTP. Residue K31 is modified to N6-methyllysine. Residues 71-75 (GITID) are G2. Position 80 is an N6,N6,N6-trimethyllysine (K80). A G3 region spans residues 92-95 (DAPG). Residues 92–96 (DAPGH) and 154–157 (NKMD) contribute to the GTP site. A G4 region spans residues 154–157 (NKMD). The tract at residues 193-195 (SGF) is G5. N6,N6-dimethyllysine; alternate is present on K317. K317 carries the N6-methyllysine; alternate modification. Residue K391 is modified to N6-methyllysine.

This sequence belongs to the TRAFAC class translation factor GTPase superfamily. Classic translation factor GTPase family. EF-Tu/EF-1A subfamily.

It localises to the cytoplasm. Its function is as follows. This protein promotes the GTP-dependent binding of aminoacyl-tRNA to the A-site of ribosomes during protein biosynthesis. The protein is Elongation factor 1-alpha (TEF) of Pseudoechria curvicolla (Podospora curvicolla).